Consider the following 224-residue polypeptide: Serum amyloid P-component (224 aa).

A signal peptide spans 1–19 (MERLLLWVSVLASLPEAFA). The Pentraxin (PTX) domain occupies 24-224 (TGKVFVFPRE…YVVIKPRVWS (201 aa)). The N-linked (GlcNAc...) asparagine glycan is linked to N51. C55 and C114 form a disulfide bridge. Residues D77, N78, E155, Q156, D157, and Q167 each coordinate Ca(2+).

The protein belongs to the pentraxin family. Homopentamer. Pentraxin (or pentaxin) have a discoid arrangement of 5 non-covalently bound subunits. Requires Ca(2+) as cofactor.

It is found in the secreted. This Sus scrofa (Pig) protein is Serum amyloid P-component (APCS).